A 446-amino-acid polypeptide reads, in one-letter code: NAD(P)H sulfur oxidoreductase (CoA-dependent) (446 aa).

An FAD-binding site is contributed by 17–18 (AA). Residue arginine 28 participates in CoA binding. FAD-binding positions include 39-40 (EA) and 46-48 (HAP). CoA-binding positions include 45–49 (SHAPC), 66–67 (HY), and arginine 76. Catalysis depends on cysteine 49, which acts as the Redox-active. FAD contacts are provided by valine 86, aspartate 284, and alanine 302. Residues asparagine 306 and lysine 362 each contribute to the CoA site. Residue tyrosine 426 participates in FAD binding. Residues tryptophan 434 and arginine 442 each coordinate CoA.

It belongs to the class-III pyridine nucleotide-disulfide oxidoreductase family. FAD is required as a cofactor.

The catalysed reaction is hydrogen sulfide + NADP(+) = sulfur + NADPH. It catalyses the reaction hydrogen sulfide + NAD(+) = sulfur + NADH. Its function is as follows. Catalyzes the CoA-dependent reduction of elemental sulfur (S(0)) to produce hydrogen sulfide. The chain is NAD(P)H sulfur oxidoreductase (CoA-dependent) from Pyrococcus abyssi (strain GE5 / Orsay).